Consider the following 412-residue polypeptide: Adenosine receptor A2a (412 aa).

Topologically, residues 1–7 are extracellular; that stretch reads MPIMGSS. Residues 8 to 32 form a helical membrane-spanning segment; it reads VYITVELAIAVLAILGNVLVCWAVW. The Cytoplasmic segment spans residues 33 to 42; that stretch reads LNSNLQNVTN. The helical transmembrane segment at 43–66 threads the bilayer; it reads YFVVSLAAADIAVGVLAIPFAITI. Residues 67-77 are Extracellular-facing; it reads STGFCAACHGC. Intrachain disulfides connect cysteine 71–cysteine 159, cysteine 74–cysteine 146, and cysteine 77–cysteine 166. Residues 78 to 100 traverse the membrane as a helical segment; that stretch reads LFIACFVLVLTQSSIFSLLAIAI. The Cytoplasmic segment spans residues 101 to 120; it reads DRYIAIRIPLRYNGLVTGTR. A helical membrane pass occupies residues 121–143; it reads AKGIIAICWVLSFAIGLTPMLGW. Topologically, residues 144–173 are extracellular; the sequence is NNCGQPKEGKNHSQGCGEGQVACLFEDVVP. N-linked (GlcNAc...) asparagine glycosylation is present at asparagine 154. An adenosine-binding site is contributed by glutamate 169. A helical transmembrane segment spans residues 174 to 198; sequence MNYMVYFNFFACVLVPLLLMLGVYL. The Cytoplasmic segment spans residues 199-234; that stretch reads RIFLAARRQLKQMESQPLPGERARSTLQKEVHAAKS. A helical transmembrane segment spans residues 235–258; it reads LAIIVGLFALCWLPLHIINCFTFF. Asparagine 253 is an adenosine binding site. Cysteine 259 and cysteine 262 are joined by a disulfide. At 259-266 the chain is on the extracellular side; the sequence is CPDCSHAP. Residues 267–290 traverse the membrane as a helical segment; that stretch reads LWLMYLAIVLSHTNSVVNPFIYAY. Serine 277 and histidine 278 together coordinate adenosine. Topologically, residues 291 to 412 are cytoplasmic; it reads RIREFRQTFR…PLAQDGAGVS (122 aa). Residues 391-412 form a disordered region; sequence KGVCPEPPGLDDPLAQDGAGVS.

Belongs to the G-protein coupled receptor 1 family. As to quaternary structure, interacts (via cytoplasmic C-terminal domain) with USP4; the interaction is direct. May interact with DRD4. Interacts with NECAB2. Interacts (via cytoplasmic C-terminal domain) with GAS2L2; interaction enhances receptor-mediated adenylyl cyclase activity. In terms of processing, ubiquitinated. Deubiquitinated by USP4; leading to stabilization and expression at the cell surface.

The protein resides in the cell membrane. In terms of biological role, receptor for adenosine. The activity of this receptor is mediated by G proteins which activate adenylyl cyclase. The chain is Adenosine receptor A2a (ADORA2A) from Homo sapiens (Human).